The primary structure comprises 354 residues: Guanine nucleotide-binding protein alpha-3 subunit (354 aa).

A lipid anchor (N-myristoyl glycine) is attached at glycine 2. Cysteine 4 is lipidated: S-palmitoyl cysteine. Positions 32-354 (KVVKLLLLGA…QANLQGCGLY (323 aa)) constitute a G-alpha domain. The tract at residues 35-48 (KLLLLGAGECGKST) is G1 motif. GTP-binding positions include 40 to 47 (GAGECGKS), 176 to 182 (LLSRIKT), 201 to 205 (DVGGQ), 270 to 273 (NKKD), and alanine 326. Mg(2+) contacts are provided by serine 47 and threonine 182. A G2 motif region spans residues 174–182 (DILLSRIKT). The tract at residues 197-206 (FRVFDVGGQR) is G3 motif. Residues 266-273 (ILFLNKKD) are G4 motif. A G5 motif region spans residues 324–329 (TCATDT).

The protein belongs to the G-alpha family. G(q) subfamily. As to quaternary structure, g proteins are composed of 3 units; alpha, beta and gamma. The alpha chain contains the guanine nucleotide binding site.

Its function is as follows. Guanine nucleotide-binding proteins (G proteins) are involved as modulators or transducers in various transmembrane signaling systems. Promotes transcription of 3',5'-cyclic phosphodiesterases pde-1 and pde-5, leading to reduced cGMP levels in sensory neurons. This causes suppression of insulin production and signaling which leads to increased daf-16 activity and contributes to increased adult lifespan and resistance to oxidative stress. In addition, by reducing cGMP levels, inhibits TGF-beta signaling pathways. Involved in behavioral response to P.aeruginosa by controlling the expression of daf-7, a member of the TGF-beta family, in ASJ sensory neurons. The polypeptide is Guanine nucleotide-binding protein alpha-3 subunit (gpa-3) (Caenorhabditis briggsae).